The primary structure comprises 195 residues: dTTP/UTP pyrophosphatase (195 aa).

The active-site Proton acceptor is Asp73.

Belongs to the Maf family. YhdE subfamily. It depends on a divalent metal cation as a cofactor.

It is found in the cytoplasm. It catalyses the reaction dTTP + H2O = dTMP + diphosphate + H(+). It carries out the reaction UTP + H2O = UMP + diphosphate + H(+). Functionally, nucleoside triphosphate pyrophosphatase that hydrolyzes dTTP and UTP. May have a dual role in cell division arrest and in preventing the incorporation of modified nucleotides into cellular nucleic acids. In Deinococcus radiodurans (strain ATCC 13939 / DSM 20539 / JCM 16871 / CCUG 27074 / LMG 4051 / NBRC 15346 / NCIMB 9279 / VKM B-1422 / R1), this protein is dTTP/UTP pyrophosphatase.